A 240-amino-acid polypeptide reads, in one-letter code: Small ribosomal subunit protein uS3 (240 aa).

In terms of domain architecture, KH type-2 spans 39 to 108 (LRKFLKKKLY…ELILNIKEER (70 aa)). A compositionally biased stretch (basic and acidic residues) spans 213 to 224 (MNSDDTATPERK). A disordered region spans residues 213-240 (MNSDDTATPERKAPRRRKGRRNVNAKKN). Residues 225-240 (APRRRKGRRNVNAKKN) are compositionally biased toward basic residues.

The protein belongs to the universal ribosomal protein uS3 family. In terms of assembly, part of the 30S ribosomal subunit. Forms a tight complex with proteins S10 and S14.

Its function is as follows. Binds the lower part of the 30S subunit head. Binds mRNA in the 70S ribosome, positioning it for translation. In Nautilia profundicola (strain ATCC BAA-1463 / DSM 18972 / AmH), this protein is Small ribosomal subunit protein uS3.